Here is a 450-residue protein sequence, read N- to C-terminus: Probable ECA polymerase (450 aa).

Transmembrane regions (helical) follow at residues 6-26, 37-57, 63-83, 118-138, 155-175, 181-201, 207-227, 228-248, 341-361, 378-398, and 410-430; these read FSGL…LTWF, VFFS…TSVL, VGVA…CFYA, VILM…NGFL, GVAL…VYFL, AWLF…MIVG, IIIA…ISLW, MLAA…LKRY, LVVM…GLII, YKAA…IVLA, and VFFI…YWLF.

This sequence belongs to the WzyE family. As to quaternary structure, probably part of a complex composed of WzxE, WzyE and WzzE.

It localises to the cell inner membrane. It participates in bacterial outer membrane biogenesis; enterobacterial common antigen biosynthesis. Functionally, probably involved in the polymerization of enterobacterial common antigen (ECA) trisaccharide repeat units. The chain is Probable ECA polymerase from Shigella flexneri.